The chain runs to 276 residues: MQKIKIIIASDSVGETAEQVAKACVSQFNSKNFKSEIVRYPYIETIENVDEVIEIAKENELNIVVFTLVKPDIKQYMEERLAENKIKHVDIMGPLMSILTDKIDEQPYCEPGIVHKLDEAYFKKIEAIEFAVKYDDGKDPKGLPKADIVLIGISRTSKTPLSQFLAHKRYKVMNIPIVPEINPPEALFEIDPKKCIALKISEEKLNKIRKERLKQLGLGDSARYATGQRIQEELEYFDNIVNKIGCPVIDVSDKAIEETANDIMYIIEQNKTNKSE.

152–159 (GISRTSKT) is an ADP binding site.

It belongs to the pyruvate, phosphate/water dikinase regulatory protein family. PDRP subfamily.

It carries out the reaction N(tele)-phospho-L-histidyl/L-threonyl-[pyruvate, phosphate dikinase] + ADP = N(tele)-phospho-L-histidyl/O-phospho-L-threonyl-[pyruvate, phosphate dikinase] + AMP + H(+). The catalysed reaction is N(tele)-phospho-L-histidyl/O-phospho-L-threonyl-[pyruvate, phosphate dikinase] + phosphate + H(+) = N(tele)-phospho-L-histidyl/L-threonyl-[pyruvate, phosphate dikinase] + diphosphate. In terms of biological role, bifunctional serine/threonine kinase and phosphorylase involved in the regulation of the pyruvate, phosphate dikinase (PPDK) by catalyzing its phosphorylation/dephosphorylation. This chain is Putative pyruvate, phosphate dikinase regulatory protein, found in Staphylococcus carnosus (strain TM300).